Here is a 249-residue protein sequence, read N- to C-terminus: Transcription factor MYB90 (249 aa).

HTH myb-type domains are found at residues 5 to 57 (SKGL…LNYL) and 58 to 112 (KPSI…SKKH). DNA-binding regions (H-T-H motif) lie at residues 33-57 (WHQV…LNYL) and 85-108 (WSLI…NTHL).

Interacts with BHLH12/MYC1, BHLH1/GL3/MYC6, BHLH2/EGL3/MYC146, and BHLH42/TT8. As to expression, expressed only in leaves and siliques.

It is found in the nucleus. In terms of biological role, transcription activator, when associated with BHLH12/MYC1, EGL3, or GL3. Promotes the synthesis of phenylpropanoid-derived compounds such as anthocyanins. The polypeptide is Transcription factor MYB90 (MYB90) (Arabidopsis thaliana (Mouse-ear cress)).